Here is an 86-residue protein sequence, read N- to C-terminus: Co-chaperonin GroES (86 aa).

It belongs to the GroES chaperonin family. Heptamer of 7 subunits arranged in a ring. Interacts with the chaperonin GroEL.

Its subcellular location is the cytoplasm. Functionally, together with the chaperonin GroEL, plays an essential role in assisting protein folding. The GroEL-GroES system forms a nano-cage that allows encapsulation of the non-native substrate proteins and provides a physical environment optimized to promote and accelerate protein folding. GroES binds to the apical surface of the GroEL ring, thereby capping the opening of the GroEL channel. This is Co-chaperonin GroES from Sulfurovum sp. (strain NBC37-1).